A 184-amino-acid polypeptide reads, in one-letter code: Ribosome-recycling factor (184 aa).

The protein belongs to the RRF family.

It localises to the cytoplasm. Functionally, responsible for the release of ribosomes from messenger RNA at the termination of protein biosynthesis. May increase the efficiency of translation by recycling ribosomes from one round of translation to another. This Aster yellows witches'-broom phytoplasma (strain AYWB) protein is Ribosome-recycling factor.